We begin with the raw amino-acid sequence, 326 residues long: MAVYTDINEIELGAFLRHYDIGTLTSYKGIAEGVENSNYLLHTSSGSFILTLYEKRTNREDLPFFLGLMQHLAKRGLECPQPVVRNDGAMIGQLAGRPAAIVTFLEGMWMRRPTVAHCEAVGEGLAHMHLAGADFPMRRRNGLTLPDWRPLWNLSRKCADTVERGLVAETEADLDFLEKNWPADLPQGVIHADLFPDNAFFLGDRLSGFIDFYFACTDILAYDVAVCLNAWCFEKDFSYNRTKGAALLRGYTSVRPLSEAEANALLVLARGAAVRFMLTRLYDWLTVPAGSFVVKKDPMEYVRRMRFHRQIESGAEYGLEMQGVAA.

The protein belongs to the pseudomonas-type ThrB family.

It catalyses the reaction L-homoserine + ATP = O-phospho-L-homoserine + ADP + H(+). Its pathway is amino-acid biosynthesis; L-threonine biosynthesis; L-threonine from L-aspartate: step 4/5. This is Homoserine kinase from Brucella melitensis biotype 1 (strain ATCC 23456 / CCUG 17765 / NCTC 10094 / 16M).